Consider the following 747-residue polypeptide: MFHGQGFSRNRCNVVAVVSGAELCDTNNQIDGTSHQPKYPFPDLSSSGRLKFQVLNNPTPEEFQVAVNSSATDFVYLQGEHSGDSDEVGPLVLGYTDFSTPDALVTLFGSTLPTTVYLELPNGEELAQALYSKGVQYVIYWKNVFSKYAACHFRHSLFSVIQSSCSDTWDVFHVAEASFRLYCTSDNAVLPSNSNRKMNYEMGPCLLGEPPKIDVVSPEADELEEENSLESLPSIKIYDEDVTVRFLLCGPPCTVDTFLLGSLMDGLNALLRIEMRGSKLHNRSSAPAPPLQAGTFTRGVVTMRCDVSTCSSAHISMLVSGNAQTCFSDQLLENHIKHEVVEKIQLVHSVVNSEETKRGFSEPRRSASIACGASVCEVSMQVPTWALQVLRQLAPDVSYRSLVVLGVASIQGLSVASFEKDDAERLLFFCGQQINDTSNHDALLSKIPNWLTPPLPTRKRSEPCRESKEIENGGPTSRKINVAALRPIPHTRRHKMIPFSGYSEIGRFDGDHTKGSLPMPPKHGASGGTPVTHRKAFSGSYQRKQIISLNPLPLKKHDCGRAHIQVCSEEEFLRDVMQFLLIRGHTRLVPPGGLAEFPDAVLNSKRLDLFNLYREVVSRGGFHVGNGINWKGQVFSKMRNHTLTNRMTGVGNTLKRHYETYLLEYEYAHDDVDGECCLICRSSTAGDWVNCGSCGEWAHFGCDRRPGLGAFKDYAKTDGLEYVCPNCSVSNYRKKSQKTSNGGLLVP.

A disordered region spans residues Pro-454–Pro-475. Over residues Lys-459 to Glu-471 the composition is skewed to basic and acidic residues. The ARID domain maps to Val-566–Asp-670. The PHD-type zinc finger occupies Gly-674–Ser-730.

Its subcellular location is the nucleus. The sequence is that of AT-rich interactive domain-containing protein 4 (ARID4) from Arabidopsis thaliana (Mouse-ear cress).